Reading from the N-terminus, the 488-residue chain is ATP synthase subunit beta (488 aa).

164–171 (GGAGVGKT) contributes to the ATP binding site.

The protein belongs to the ATPase alpha/beta chains family. In terms of assembly, F-type ATPases have 2 components, CF(1) - the catalytic core - and CF(0) - the membrane proton channel. CF(1) has five subunits: alpha(3), beta(3), gamma(1), delta(1), epsilon(1). CF(0) has four main subunits: a(1), b(1), b'(1) and c(9-12).

The protein resides in the cellular thylakoid membrane. It carries out the reaction ATP + H2O + 4 H(+)(in) = ADP + phosphate + 5 H(+)(out). Its function is as follows. Produces ATP from ADP in the presence of a proton gradient across the membrane. The catalytic sites are hosted primarily by the beta subunits. This Prochlorococcus marinus (strain MIT 9313) protein is ATP synthase subunit beta.